The chain runs to 852 residues: Eukaryotic translation initiation factor 3 subunit C (852 aa).

The interval Met1–Lys90 is disordered. Residues Ser14–Ser57 are compositionally biased toward acidic residues. Positions Phe597–His772 constitute a PCI domain. Polar residues predominate over residues Thr798–Met809. Residues Thr798–Ala852 form a disordered region. The segment covering Gln810–Gln822 has biased composition (low complexity). Basic and acidic residues predominate over residues Lys823 to Arg835. Residues Val841–Ala852 are compositionally biased toward polar residues.

This sequence belongs to the eIF-3 subunit C family. In terms of assembly, component of the eukaryotic translation initiation factor 3 (eIF-3) complex.

It localises to the cytoplasm. Functionally, component of the eukaryotic translation initiation factor 3 (eIF-3) complex, which is involved in protein synthesis of a specialized repertoire of mRNAs and, together with other initiation factors, stimulates binding of mRNA and methionyl-tRNAi to the 40S ribosome. The eIF-3 complex specifically targets and initiates translation of a subset of mRNAs involved in cell proliferation. In Debaryomyces hansenii (strain ATCC 36239 / CBS 767 / BCRC 21394 / JCM 1990 / NBRC 0083 / IGC 2968) (Yeast), this protein is Eukaryotic translation initiation factor 3 subunit C.